We begin with the raw amino-acid sequence, 57 residues long: Alpha-conotoxin-like Sm1.2 (57 aa).

The N-terminal stretch at 1–16 is a signal peptide; sequence MFTVFLLVVLATTVVS. Residues 17 to 42 constitute a propeptide that is removed on maturation; that stretch reads FPSDRESDGANDEARTDEPEEHGPDR. The segment at 17–46 is disordered; the sequence is FPSDRESDGANDEARTDEPEEHGPDRNGCC. Basic and acidic residues predominate over residues 19-41; the sequence is SDRESDGANDEARTDEPEEHGPD. Intrachain disulfides connect C45–C51 and C46–C56. C56 is subject to Cysteine amide.

Belongs to the conotoxin A superfamily. As to expression, expressed by the venom duct.

It localises to the secreted. Alpha-conotoxins act on postsynaptic membranes, they bind to the nicotinic acetylcholine receptors (nAChR) and thus inhibit them. The protein is Alpha-conotoxin-like Sm1.2 of Conus stercusmuscarum (Fly-specked cone).